Reading from the N-terminus, the 359-residue chain is Peptide chain release factor 1 (359 aa).

At Gln-235 the chain carries N5-methylglutamine.

This sequence belongs to the prokaryotic/mitochondrial release factor family. In terms of processing, methylated by PrmC. Methylation increases the termination efficiency of RF1.

Its subcellular location is the cytoplasm. In terms of biological role, peptide chain release factor 1 directs the termination of translation in response to the peptide chain termination codons UAG and UAA. This Nitrosomonas europaea (strain ATCC 19718 / CIP 103999 / KCTC 2705 / NBRC 14298) protein is Peptide chain release factor 1.